The chain runs to 276 residues: Large ribosomal subunit protein uL2 (276 aa).

Disordered stretches follow at residues 29 to 54 and 224 to 276; these read PEKSLTKGLTKKAGRNNNGRVTSRRR and AMNP…RGQR. A compositionally biased stretch (basic residues) spans 256–276; sequence YKTRSKKKPSSKLIVKRRGQR.

The protein belongs to the universal ribosomal protein uL2 family. In terms of assembly, part of the 50S ribosomal subunit. Forms a bridge to the 30S subunit in the 70S ribosome.

Its function is as follows. One of the primary rRNA binding proteins. Required for association of the 30S and 50S subunits to form the 70S ribosome, for tRNA binding and peptide bond formation. It has been suggested to have peptidyltransferase activity; this is somewhat controversial. Makes several contacts with the 16S rRNA in the 70S ribosome. The chain is Large ribosomal subunit protein uL2 from Maridesulfovibrio salexigens (strain ATCC 14822 / DSM 2638 / NCIMB 8403 / VKM B-1763) (Desulfovibrio salexigens).